The sequence spans 565 residues: Proline--tRNA ligase (565 aa).

It belongs to the class-II aminoacyl-tRNA synthetase family. ProS type 1 subfamily. As to quaternary structure, homodimer.

It is found in the cytoplasm. It carries out the reaction tRNA(Pro) + L-proline + ATP = L-prolyl-tRNA(Pro) + AMP + diphosphate. In terms of biological role, catalyzes the attachment of proline to tRNA(Pro) in a two-step reaction: proline is first activated by ATP to form Pro-AMP and then transferred to the acceptor end of tRNA(Pro). As ProRS can inadvertently accommodate and process non-cognate amino acids such as alanine and cysteine, to avoid such errors it has two additional distinct editing activities against alanine. One activity is designated as 'pretransfer' editing and involves the tRNA(Pro)-independent hydrolysis of activated Ala-AMP. The other activity is designated 'posttransfer' editing and involves deacylation of mischarged Ala-tRNA(Pro). The misacylated Cys-tRNA(Pro) is not edited by ProRS. The chain is Proline--tRNA ligase from Lactobacillus acidophilus (strain ATCC 700396 / NCK56 / N2 / NCFM).